We begin with the raw amino-acid sequence, 272 residues long: ATP phosphoribosyltransferase regulatory subunit (272 aa).

This sequence belongs to the class-II aminoacyl-tRNA synthetase family. HisZ subfamily. In terms of assembly, heteromultimer composed of HisG and HisZ subunits.

It localises to the cytoplasm. It participates in amino-acid biosynthesis; L-histidine biosynthesis; L-histidine from 5-phospho-alpha-D-ribose 1-diphosphate: step 1/9. In terms of biological role, required for the first step of histidine biosynthesis. May allow the feedback regulation of ATP phosphoribosyltransferase activity by histidine. The sequence is that of ATP phosphoribosyltransferase regulatory subunit from Staphylococcus aureus (strain Mu3 / ATCC 700698).